A 101-amino-acid polypeptide reads, in one-letter code: Small ribosomal subunit protein uS14 (101 aa).

Belongs to the universal ribosomal protein uS14 family. In terms of assembly, part of the 30S ribosomal subunit. Contacts proteins S3 and S10.

In terms of biological role, binds 16S rRNA, required for the assembly of 30S particles and may also be responsible for determining the conformation of the 16S rRNA at the A site. This chain is Small ribosomal subunit protein uS14, found in Shewanella loihica (strain ATCC BAA-1088 / PV-4).